Here is a 362-residue protein sequence, read N- to C-terminus: Phosphoserine aminotransferase (362 aa).

Residues Ser9 and Arg42 each coordinate L-glutamate. Residues 76–77 (GR), Trp102, Thr153, Asp174, and Gln197 contribute to the pyridoxal 5'-phosphate site. Residue Lys198 is modified to N6-(pyridoxal phosphate)lysine. Position 239 to 240 (239 to 240 (NT)) interacts with pyridoxal 5'-phosphate.

This sequence belongs to the class-V pyridoxal-phosphate-dependent aminotransferase family. SerC subfamily. As to quaternary structure, homodimer. The cofactor is pyridoxal 5'-phosphate.

The protein resides in the cytoplasm. The enzyme catalyses O-phospho-L-serine + 2-oxoglutarate = 3-phosphooxypyruvate + L-glutamate. The catalysed reaction is 4-(phosphooxy)-L-threonine + 2-oxoglutarate = (R)-3-hydroxy-2-oxo-4-phosphooxybutanoate + L-glutamate. Its pathway is amino-acid biosynthesis; L-serine biosynthesis; L-serine from 3-phospho-D-glycerate: step 2/3. The protein operates within cofactor biosynthesis; pyridoxine 5'-phosphate biosynthesis; pyridoxine 5'-phosphate from D-erythrose 4-phosphate: step 3/5. Catalyzes the reversible conversion of 3-phosphohydroxypyruvate to phosphoserine and of 3-hydroxy-2-oxo-4-phosphonooxybutanoate to phosphohydroxythreonine. The chain is Phosphoserine aminotransferase from Shigella boydii serotype 4 (strain Sb227).